Here is a 192-residue protein sequence, read N- to C-terminus: Signal peptidase complex catalytic subunit sec11 (192 aa).

Residues 1–18 (MLSFLSSNLSSTRQSLAQ) lie on the Cytoplasmic side of the membrane. Residues 19–39 (VLNFALVLSTAFMLWKGLSVF) traverse the membrane as a helical; Signal-anchor for type II membrane protein segment. Residues 40 to 192 (TASSSPIVVV…GLMVILQREQ (153 aa)) lie on the Lumenal side of the membrane. Residues Ser53, His92, and Asp133 each act as charge relay system in the active site. The interval 177–188 (VLLGIMGLMVIL) is C-terminal short (CTS) helix.

The protein belongs to the peptidase S26B family. Component of the signal peptidase complex (SPC) composed of a catalytic subunit SEC11 and three accessory subunits SPC1, SPC2 and SPC3. The complex induces a local thinning of the ER membrane which is used to measure the length of the signal peptide (SP) h-region of protein substrates. This ensures the selectivity of the complex towards h-regions shorter than 18-20 amino acids. SPC associates with the translocon complex.

The protein resides in the endoplasmic reticulum membrane. The enzyme catalyses Cleavage of hydrophobic, N-terminal signal or leader sequences from secreted and periplasmic proteins.. In terms of biological role, catalytic component of the signal peptidase complex (SPC) which catalyzes the cleavage of N-terminal signal sequences from nascent proteins as they are translocated into the lumen of the endoplasmic reticulum. Specifically cleaves N-terminal signal peptides that contain a hydrophobic alpha-helix (h-region) shorter than 18-20 amino acids. This Neosartorya fischeri (strain ATCC 1020 / DSM 3700 / CBS 544.65 / FGSC A1164 / JCM 1740 / NRRL 181 / WB 181) (Aspergillus fischerianus) protein is Signal peptidase complex catalytic subunit sec11 (sec11).